Reading from the N-terminus, the 423-residue chain is Transcription factor AP-2-epsilon (423 aa).

Residues 1–108 (MLVHSYSSME…EDAGLLSQPH (108 aa)) are disordered. Positions 14-27 (GLSSSSPGGRLSQL) are enriched in low complexity. Positions 50 to 55 (YFPPPY) match the PPxY motif motif. Over residues 57–70 (QSSLSYSQSQDGGY) the composition is skewed to low complexity. The segment covering 79 to 93 (SLNSLHQHQQAAWHS) has biased composition (polar residues). Residues 276–405 (RRKAANVTLL…YLLEALKLLD (130 aa)) form an H-S-H (helix-span-helix), dimerization region.

Belongs to the AP-2 family. Binds DNA as a dimer. Can form homodimers or heterodimers with other AP-2 family members.

Its subcellular location is the nucleus. Functionally, sequence-specific DNA-binding protein that interacts with inducible viral and cellular enhancer elements to regulate transcription of selected genes. AP-2 factors bind to the consensus sequence 5'-GCCNNNGGC-3' and activate genes involved in a large spectrum of important biological functions. This Danio rerio (Zebrafish) protein is Transcription factor AP-2-epsilon.